Consider the following 465-residue polypeptide: Midnolin (465 aa).

Residues 32–106 enclose the Ubiquitin-like domain; that stretch reads MSLAIHSTTG…LTLVPTVEAG (75 aa). 2 disordered regions span residues 185–262 and 400–445; these read SVAT…SRKP and RLRR…GLDF. 2 stretches are compositionally biased toward low complexity: residues 195 to 219 and 240 to 257; these read RPVS…PSPV and SPPA…SPTP. A required for nucleolar localization region spans residues 397 to 424; the sequence is QQKRLRRKARRDARGPYHWTPSRKAGRS.

Interacts with GCK; the interaction occurs preferentially at low glucose levels. Interacts with the proteasome. As to expression, expressed at high levels in brain and liver with significantly lower levels in muscle.

It localises to the nucleus. The protein localises to the cytoplasm. The protein resides in the cytosol. Its subcellular location is the nucleolus. Its function is as follows. Facilitates the ubiquitin-independent proteasomal degradation of stimulus-induced transcription factors such as FOSB, EGR1, NR4A1, and IRF4 to the proteasome for degradation. Promotes also the degradation of other substrates such as CBX4. Plays a role in inhibiting the activity of glucokinase GCK and both glucose-induced and basal insulin secretion. In Mus musculus (Mouse), this protein is Midnolin (Midn).